The following is a 186-amino-acid chain: Transcription factor FapR (186 aa).

It belongs to the FapR family.

Its function is as follows. Transcriptional factor involved in regulation of membrane lipid biosynthesis by repressing genes involved in fatty acid and phospholipid metabolism. This chain is Transcription factor FapR, found in Halalkalibacterium halodurans (strain ATCC BAA-125 / DSM 18197 / FERM 7344 / JCM 9153 / C-125) (Bacillus halodurans).